The chain runs to 329 residues: Microtubule-associated protein RP/EB family member 1C (329 aa).

Residues 13 to 115 (FVGRSEILAW…FMQWMKKYCD (103 aa)) enclose the Calponin-homology (CH) domain. The segment covering 130-141 (REASKGGKEATK) has biased composition (basic and acidic residues). A disordered region spans residues 130-203 (REASKGGKEA…SAKQSKPVPA (74 aa)). The segment covering 174 to 185 (SNNTGTHHSSTG) has biased composition (low complexity). Residues 193 to 263 (PSAKQSKPVP…LYAADGEDVG (71 aa)) form the EB1 C-terminal domain. The interval 289–311 (KRKLIVNLDVDVAAITTLSPRQR) is required for nuclear localization.

The protein belongs to the MAPRE family. Homodimer. In terms of tissue distribution, highly expressed in the root and shoot meristems, in guard cells of leaf stomata, pollen grains and pollen tubes.

The protein localises to the nucleus. The protein resides in the cytoplasm. It is found in the cytoskeleton. It localises to the spindle. Its subcellular location is the phragmoplast. Plant-specific EB1 subtype that functions preferentially at early stages of plant mitosis by regulating spindle positioning and chromosome segregation. Accumulates in the prophase nucleus and is required to maintain spindle bipolarity during premetaphase and/or metaphase and for efficient segregation of chromosomes at anaphase. May play a role in the dynamics of microtubule network in elongating pollen tubes. In Arabidopsis thaliana (Mouse-ear cress), this protein is Microtubule-associated protein RP/EB family member 1C (EB1C).